We begin with the raw amino-acid sequence, 801 residues long: Protein 4.1 (801 aa).

A disordered region spans residues 1–187 (MTTEKGLLAE…GESKASHKVV (187 aa)). Residues 45-58 (EQSQESPSTTSPST) show a composition bias toward low complexity. Positions 88-107 (SDEKEVELLGEKGQDQKDVD) are enriched in basic and acidic residues. A compositionally biased stretch (acidic residues) spans 108–117 (EGLGEQLEDD). The segment covering 141 to 151 (SLSSAETQPAQ) has biased composition (polar residues). Positions 154 to 166 (QKEDQDPEADCED) are enriched in acidic residues. Residues 167-182 (VEGKEPIKKPEGESKA) show a composition bias toward basic and acidic residues. An FERM domain is found at 193–474 (MRCKVTLLDD…EHHTFFRLTS (282 aa)). Positions 477-587 (SIPKHRFLSL…GMPNQRESPK (111 aa)) are hydrophilic. The segment at 516–613 (RTGSKRASRS…DKVKDLEKTQ (98 aa)) is disordered. Residues 563–577 (RVEEMPKKTEEKPKE) are compositionally biased toward basic and acidic residues. The segment at 588-651 (DVKATQQDSP…WDKRLSTHSP (64 aa)) is spectrin--actin-binding. A compositionally biased stretch (polar residues) spans 591–601 (ATQQDSPSPTV). Positions 604–613 (DKVKDLEKTQ) are enriched in basic and acidic residues. Positions 653–801 (RTLSFNGQVQ…GVVHQETEIA (149 aa)) are C-terminal (CTD).

Binds with a high affinity to glycophorin and with lower affinity to band III protein. Associates with the nuclear mitotic apparatus. Binds calmodulin. Post-translationally, phosphorylated at multiple sites by different protein kinases and each phosphorylation event selectively modulates the protein's functions. As to expression, found exclusively in photoreceptors following the terminal mitosis of retinal neurons. When retinal synaptogenesis is complete, protein 4.1 is also expressed in the inner retina. In adult amphibian retinas, protein 4.1 is detected in photoreceptors, bipolar cells, and ganglion cell axons.

The protein localises to the nucleus. The protein resides in the cytoplasm. It localises to the cytoskeleton. It is found in the cell cortex. Functionally, protein 4.1 is a major structural element of the erythrocyte membrane skeleton. It plays a key role in regulating membrane physical properties of mechanical stability and deformability by stabilizing spectrin-actin interaction. May be required for dynein-dynactin complex and NUMA1 recruitment at the mitotic cell cortex during anaphase. This is Protein 4.1 from Xenopus laevis (African clawed frog).